The primary structure comprises 426 residues: Na(+)/H(+) antiporter 1 (426 aa).

12 consecutive transmembrane segments (helical) span residues 1–21 (MELMMAIGYLGLALVLGSLVA), 29–49 (IPDIPLLLLLGLIIGPFLQII), 57–77 (IFEYAGPIGLIFILLGGAFTM), 95–115 (ITFLITLLISGFIFNMVLNLP), 120–140 (VGYLFGAITAATDPATLIPVF), 158–178 (IFNDPLGIVSTSVILGLFGLF), 184–204 (LIDLITLAGGAIVVGLLLAKI), 208–228 (IIIHCDFHEYVAPLVLGGAML), 236–256 (LLPSICGYGFSGYMAVAIMGL), 286–306 (VFIFVFLGACIKLSMLENYFI), 309–329 (LLVALGSIFLARPLGVFLGLI), and 382–402 (IAGTIIIGTFMTILLSVILEA).

It belongs to the monovalent cation:proton antiporter 1 (CPA1) transporter (TC 2.A.36) family.

It is found in the cell membrane. In terms of biological role, this is a Na(+)/H(+) antiporter. Can also transport lithium. The chain is Na(+)/H(+) antiporter 1 from Methanocaldococcus jannaschii (strain ATCC 43067 / DSM 2661 / JAL-1 / JCM 10045 / NBRC 100440) (Methanococcus jannaschii).